The following is a 56-amino-acid chain: Small ribosomal subunit protein uS14 (56 aa).

4 residues coordinate Zn(2+): Cys-21, Cys-24, Cys-39, and Cys-42.

This sequence belongs to the universal ribosomal protein uS14 family. Zn(2+) is required as a cofactor.

The sequence is that of Small ribosomal subunit protein uS14 (RPS29) from Debaryomyces hansenii (strain ATCC 36239 / CBS 767 / BCRC 21394 / JCM 1990 / NBRC 0083 / IGC 2968) (Yeast).